Consider the following 216-residue polypeptide: Serine/threonine-protein phosphatase 1 (216 aa).

Residues Asp24, His26, Asp53, and Asn79 each coordinate Mn(2+). The Proton donor role is filled by His80. Mn(2+) is bound at residue His185.

Belongs to the PPP phosphatase family. PP-1 subfamily. Mn(2+) is required as a cofactor.

It catalyses the reaction O-phospho-L-seryl-[protein] + H2O = L-seryl-[protein] + phosphate. The catalysed reaction is O-phospho-L-threonyl-[protein] + H2O = L-threonyl-[protein] + phosphate. Its activity is regulated as follows. Inhibited by cadmium, copper, zinc when added cobalt when added concomitantly with manganese. Its function is as follows. Can hydrolyze phosphorylated Ser-, Thr- or Tyr-substrates in vitro. The natural substrate is unknown. The chain is Serine/threonine-protein phosphatase 1 (pphA) from Salmonella typhimurium (strain LT2 / SGSC1412 / ATCC 700720).